Consider the following 616-residue polypeptide: UvrABC system protein C (616 aa).

The GIY-YIG domain maps to 21 to 99 (HQPGVYRMYD…IKLYLPKYNV (79 aa)). Positions 209 to 244 (RQVIASLVEKMEQASQSLNFEQAATFRDQIQALRRV) constitute a UVR domain.

It belongs to the UvrC family. Interacts with UvrB in an incision complex.

The protein localises to the cytoplasm. The UvrABC repair system catalyzes the recognition and processing of DNA lesions. UvrC both incises the 5' and 3' sides of the lesion. The N-terminal half is responsible for the 3' incision and the C-terminal half is responsible for the 5' incision. This chain is UvrABC system protein C, found in Photobacterium profundum (strain SS9).